Reading from the N-terminus, the 466-residue chain is Ribulose bisphosphate carboxylase large chain (466 aa).

N6,N6,N6-trimethyllysine is present on lysine 5. Substrate-binding residues include asparagine 114 and threonine 164. The active-site Proton acceptor is lysine 166. Lysine 168 is a binding site for substrate. Mg(2+) contacts are provided by lysine 192, aspartate 194, and glutamate 195. Position 192 is an N6-carboxylysine (lysine 192). Histidine 285 acts as the Proton acceptor in catalysis. 3 residues coordinate substrate: arginine 286, histidine 318, and serine 370.

The protein belongs to the RuBisCO large chain family. Type I subfamily. Heterohexadecamer of 8 large chains and 8 small chains; disulfide-linked. The disulfide link is formed within the large subunit homodimers. It depends on Mg(2+) as a cofactor. Post-translationally, the disulfide bond which can form in the large chain dimeric partners within the hexadecamer appears to be associated with oxidative stress and protein turnover.

Its subcellular location is the plastid. It is found in the chloroplast. It carries out the reaction 2 (2R)-3-phosphoglycerate + 2 H(+) = D-ribulose 1,5-bisphosphate + CO2 + H2O. The catalysed reaction is D-ribulose 1,5-bisphosphate + O2 = 2-phosphoglycolate + (2R)-3-phosphoglycerate + 2 H(+). In terms of biological role, ruBisCO catalyzes two reactions: the carboxylation of D-ribulose 1,5-bisphosphate, the primary event in carbon dioxide fixation, as well as the oxidative fragmentation of the pentose substrate in the photorespiration process. Both reactions occur simultaneously and in competition at the same active site. The polypeptide is Ribulose bisphosphate carboxylase large chain (Cercidiphyllum japonicum (Katsura tree)).